The chain runs to 130 residues: Small ribosomal subunit protein uS8 (130 aa).

This sequence belongs to the universal ribosomal protein uS8 family.

The protein resides in the cytoplasm. The sequence is that of Small ribosomal subunit protein uS8 (RPS15A) from Brassica napus (Rape).